Consider the following 161-residue polypeptide: Phosphopantetheine adenylyltransferase (161 aa).

Ser10 is a binding site for substrate. ATP contacts are provided by residues 10 to 11 (SF) and His18. Residues Lys42, Ala75, and Arg89 each coordinate substrate. Residues 90–92 (GLR), Glu100, and 125–131 (LSPISSS) each bind ATP.

This sequence belongs to the bacterial CoaD family. As to quaternary structure, homohexamer. Mg(2+) serves as cofactor.

The protein resides in the cytoplasm. The enzyme catalyses (R)-4'-phosphopantetheine + ATP + H(+) = 3'-dephospho-CoA + diphosphate. It participates in cofactor biosynthesis; coenzyme A biosynthesis; CoA from (R)-pantothenate: step 4/5. Reversibly transfers an adenylyl group from ATP to 4'-phosphopantetheine, yielding dephospho-CoA (dPCoA) and pyrophosphate. The chain is Phosphopantetheine adenylyltransferase from Streptococcus agalactiae serotype III (strain NEM316).